Here is a 639-residue protein sequence, read N- to C-terminus: Threonine--tRNA ligase (639 aa).

Positions 1–61 constitute a TGS domain; sequence MIHITLPDGS…TADCRLSIIT (61 aa). Residues 242–533 are catalytic; sequence DHRKLGRELD…LLEQHAGALP (292 aa). Cys-333, His-384, and His-510 together coordinate Zn(2+).

It belongs to the class-II aminoacyl-tRNA synthetase family. Homodimer. Zn(2+) is required as a cofactor.

The protein localises to the cytoplasm. It catalyses the reaction tRNA(Thr) + L-threonine + ATP = L-threonyl-tRNA(Thr) + AMP + diphosphate + H(+). Functionally, catalyzes the attachment of threonine to tRNA(Thr) in a two-step reaction: L-threonine is first activated by ATP to form Thr-AMP and then transferred to the acceptor end of tRNA(Thr). Also edits incorrectly charged L-seryl-tRNA(Thr). The polypeptide is Threonine--tRNA ligase (Verminephrobacter eiseniae (strain EF01-2)).